The chain runs to 458 residues: tRNA-2-methylthio-N(6)-dimethylallyladenosine synthase (458 aa).

The MTTase N-terminal domain occupies 15–134 (KKVFIKTYGC…LPDLLEQTKQ (120 aa)). The [4Fe-4S] cluster site is built by C24, C60, C97, C175, C179, and C182. Residues 161 to 393 (RKRGVSAFLT…QVLLLEQQNA (233 aa)) enclose the Radical SAM core domain. Residues 396–457 (RSKIGQTTDV…SNSFVGEIAN (62 aa)) enclose the TRAM domain.

This sequence belongs to the methylthiotransferase family. MiaB subfamily. As to quaternary structure, monomer. It depends on [4Fe-4S] cluster as a cofactor.

Its subcellular location is the cytoplasm. It carries out the reaction N(6)-dimethylallyladenosine(37) in tRNA + (sulfur carrier)-SH + AH2 + 2 S-adenosyl-L-methionine = 2-methylsulfanyl-N(6)-dimethylallyladenosine(37) in tRNA + (sulfur carrier)-H + 5'-deoxyadenosine + L-methionine + A + S-adenosyl-L-homocysteine + 2 H(+). In terms of biological role, catalyzes the methylthiolation of N6-(dimethylallyl)adenosine (i(6)A), leading to the formation of 2-methylthio-N6-(dimethylallyl)adenosine (ms(2)i(6)A) at position 37 in tRNAs that read codons beginning with uridine. This chain is tRNA-2-methylthio-N(6)-dimethylallyladenosine synthase, found in Bartonella quintana (strain Toulouse) (Rochalimaea quintana).